Here is a 64-residue protein sequence, read N- to C-terminus: DNA-binding protein 7a (64 aa).

An N6-methyllysine; partial mark is found at Lys5 and Lys7.

This sequence belongs to the 7 kDa DNA-binding/endoribonuclease P2 family. Homodimer. Post-translationally, lys-5 and Lys-7 were found to be 60% monomethylated. In terms of processing, ADP-ribosylated by endogenous proteins in vitro.

In terms of biological role, can constrain negative DNA supercoils. May be involved in maintaining the integrity of the genome at high temperature. Has RNA endonuclease activity with a narrow substrate specificity; the cleavage products are 3'-phosphooligonucleotides. This is DNA-binding protein 7a (sso7a1) from Saccharolobus solfataricus (strain ATCC 35092 / DSM 1617 / JCM 11322 / P2) (Sulfolobus solfataricus).